Here is a 319-residue protein sequence, read N- to C-terminus: Sulfate adenylyltransferase subunit 2 (319 aa).

It belongs to the PAPS reductase family. CysD subfamily. Heterodimer composed of CysD, the smaller subunit, and CysN.

It catalyses the reaction sulfate + ATP + H(+) = adenosine 5'-phosphosulfate + diphosphate. It functions in the pathway sulfur metabolism; hydrogen sulfide biosynthesis; sulfite from sulfate: step 1/3. Functionally, with CysN forms the ATP sulfurylase (ATPS) that catalyzes the adenylation of sulfate producing adenosine 5'-phosphosulfate (APS) and diphosphate, the first enzymatic step in sulfur assimilation pathway. APS synthesis involves the formation of a high-energy phosphoric-sulfuric acid anhydride bond driven by GTP hydrolysis by CysN coupled to ATP hydrolysis by CysD. This is Sulfate adenylyltransferase subunit 2 from Methylobacterium radiotolerans (strain ATCC 27329 / DSM 1819 / JCM 2831 / NBRC 15690 / NCIMB 10815 / 0-1).